Reading from the N-terminus, the 124-residue chain is Small ribosomal subunit protein eS25 (124 aa).

Basic and acidic residues predominate over residues 1–22; it reads MPPKDSKQKKDTSKAKKDKDPV. The interval 1-37 is disordered; sequence MPPKDSKQKKDTSKAKKDKDPVNKSGGKAKKKKWSKG. Residues 27-37 are compositionally biased toward basic residues; that stretch reads GKAKKKKWSKG.

Belongs to the eukaryotic ribosomal protein eS25 family. Component of the small ribosomal subunit.

It is found in the cytoplasm. Functionally, component of the small ribosomal subunit. The ribosome is a large ribonucleoprotein complex responsible for the synthesis of proteins in the cell. The sequence is that of Small ribosomal subunit protein eS25 (rps25) from Ictalurus punctatus (Channel catfish).